The primary structure comprises 456 residues: MEPSPDAEEAHTVREALGRYEAALEGAVRALHEDMQGLQRGVERRVAEALRLAGPLARTVAELQRDNQRLQAQLERLTRQVEALGLATGVSPAPGTPSPPPAATVTDRAPRLGTARFSSHATFSLSGRSPSVEHDEASDLEVRRASNSCILENGHQLDAGPANGSSEVQTSSAQEPPRPRPVSLSLRMPHQPVTAVTRVSEKFSGETSASALSPTSAAIVGGFTPSPSEAISPWTPSPTEKSSSFTRSLSGSGYGAVTAGKRKDSPPLVTPPQSPPSSQPPAMTQAPRQGERRRELVRSQTLPRTSGAQARKALFEKWEQDTASKGKGETRAKLKRSQSFGVASASSIKQILLEWCRSKTVGYQHVDLQNFSSSWSDGMAFCALVHSFFPDAFDYNALSPTQRQKNFELAFTMAENLANCERLIEVEDMMVMGRKPDPMCVFTYVQSLYNHLRRFE.

Residues 24–88 (LEGAVRALHE…RQVEALGLAT (65 aa)) adopt a coiled-coil conformation. Position 96 is a phosphothreonine (threonine 96). 3 positions are modified to phosphoserine: serine 98, serine 126, and serine 131. Residues 120–129 (HATFSLSGRS) are compositionally biased toward polar residues. 3 disordered regions span residues 120–140 (HATF…ASDL), 154–190 (GHQL…RMPH), and 220–310 (VGGF…GAQA). A compositionally biased stretch (basic and acidic residues) spans 131–140 (SVEHDEASDL). Over residues 163–174 (NGSSEVQTSSAQ) the composition is skewed to polar residues. The span at 242–251 (SSSFTRSLSG) shows a compositional bias: low complexity. 3 positions are modified to phosphoserine: serine 250, serine 252, and serine 265. The span at 268–279 (LVTPPQSPPSSQ) shows a compositional bias: pro residues. Threonine 270 is modified (phosphothreonine). A Phosphoserine modification is found at serine 274. Residues 298 to 308 (RSQTLPRTSGA) show a composition bias toward polar residues. Position 339 is a phosphoserine (serine 339). Residues 346–453 (SSIKQILLEW…YVQSLYNHLR (108 aa)) enclose the Calponin-homology (CH) domain.

Belongs to the smoothelin family.

This chain is Smoothelin-like protein 2 (Smtnl2), found in Mus musculus (Mouse).